Consider the following 265-residue polypeptide: Polyphosphate glucokinase (265 aa).

Residues 1 to 18 (MTSTGPETSETPGATTQR) are compositionally biased toward polar residues. Residues 1–22 (MTSTGPETSETPGATTQRHGFG) are disordered. 24 to 29 (DVGGSG) contacts ATP.

The protein belongs to the ROK (NagC/XylR) family. Homodimer.

It carries out the reaction [phosphate](n) + D-glucose = [phosphate](n-1) + D-glucose 6-phosphate + H(+). The enzyme catalyses D-glucose + ATP = D-glucose 6-phosphate + ADP + H(+). Catalyzes the phosphorylation of glucose using polyphosphate or ATP as the phosphoryl donor. Polyphosphate, rather than ATP, seems to be the major phosphate donor for the enzyme in M.tuberculosis. GTP, UTP and CTP can replace ATP as phosphoryl donor. The polypeptide is Polyphosphate glucokinase (ppgK) (Mycobacterium tuberculosis (strain ATCC 25177 / H37Ra)).